A 130-amino-acid chain; its full sequence is Protein ApaG (130 aa).

The ApaG domain occupies 3–127 (RAVTRNIEVQ…FSLDLPGTRR (125 aa)).

In Mesorhizobium japonicum (strain LMG 29417 / CECT 9101 / MAFF 303099) (Mesorhizobium loti (strain MAFF 303099)), this protein is Protein ApaG.